The chain runs to 446 residues: Coiled-coil domain-containing protein 112 (446 aa).

Coiled coils occupy residues 23–116 and 219–400; these read LEEL…RKID and ERKK…NVSR. 2 disordered regions span residues 247–277 and 394–430; these read NNTPMLFHNKPEDNQKQKEEQRKKQKLAVEA and VENNVSRDPSRLYKPTKGWEERTKKIGPTGSGPLLHI. The span at 255–268 shows a compositional bias: basic and acidic residues; it reads NKPEDNQKQKEEQR.

It localises to the cytoplasm. It is found in the cytoskeleton. The protein localises to the microtubule organizing center. The protein resides in the centrosome. Its subcellular location is the centriolar satellite. The polypeptide is Coiled-coil domain-containing protein 112 (CCDC112) (Macaca fascicularis (Crab-eating macaque)).